Consider the following 282-residue polypeptide: Putative phosphite transport system permease protein HtxC (282 aa).

4 helical membrane passes run 23-43 (HFATSVVVLSLLAVAWYVCQI), 81-101 (LAMATIGTIFATIIAFPLALM), 130-150 (VYALVFVAAVGFGPFSGVLAI), and 239-259 (FNKMITVLAVVLLMVSAIDFI). The ABC transmembrane type-1 domain maps to 77 to 260 (AGETLAMATI…LMVSAIDFIS (184 aa)).

Belongs to the binding-protein-dependent transport system permease family.

It is found in the cell inner membrane. Its function is as follows. Probably forms part of a binding-protein-dependent hypophosphite transporter. This Stutzerimonas stutzeri (Pseudomonas stutzeri) protein is Putative phosphite transport system permease protein HtxC (htxC).